We begin with the raw amino-acid sequence, 465 residues long: Serine/threonine-protein kinase 38 (465 aa).

At Ala-2 the chain carries N-acetylalanine. The segment at 62–87 (KRLRRSAHARKETEFLRLKRTRLGLE) is interaction with S100B. Residue Thr-74 is modified to Phosphothreonine. Residues 89 to 382 (FESLKVIGRG…VEEIKNNLFF (294 aa)) form the Protein kinase domain. Residues 95 to 103 (IGRGAFGEV) and Lys-118 each bind ATP. Asp-212 acts as the Proton acceptor in catalysis. At Ser-264 the chain carries Phosphoserine. A Phosphoserine; by autocatalysis modification is found at Ser-281. Positions 306-311 (WSLGVI) match the UFM1-interacting motif (UFIM) motif. The AGC-kinase C-terminal domain occupies 383–455 (EGVDWEHIRE…KRFEGLTARG (73 aa)). A Phosphothreonine; by STK24/MST3 modification is found at Thr-444.

The protein belongs to the protein kinase superfamily. AGC Ser/Thr protein kinase family. In terms of assembly, homodimeric S100B binds two molecules of STK38. Interacts with MOB1 and MOB2. Interacts with MAP3K1 and MAP3K2 (via the kinase catalytic domain). Forms a tripartite complex with MOBKL1B and STK3/MST2. Interacts with MICAL1; leading to inhibit the protein kinase activity by antagonizing activation by MST1/STK4. Requires Mg(2+) as cofactor. ISGylated. Post-translationally, phosphorylated by STK3/MST2 and this is enhanced by MOBKL1B. In terms of tissue distribution, expressed at high levels in spleen, lung, thymus, brain and fat tissue.

The protein resides in the nucleus. It is found in the cytoplasm. The protein localises to the chromosome. The enzyme catalyses L-seryl-[protein] + ATP = O-phospho-L-seryl-[protein] + ADP + H(+). It catalyses the reaction L-threonyl-[protein] + ATP = O-phospho-L-threonyl-[protein] + ADP + H(+). With respect to regulation, activated by binding of S100B which releases autoinhibitory N-lobe interactions, enabling ATP to bind and the autophosphorylation of Ser-281. Thr-444 then undergoes calcium-dependent phosphorylation by STK24/MST3. Interactions between phosphorylated Thr-444 and the N-lobe promote additional structural changes that complete the activation of the kinase. Autoinhibition is also released by the binding of MOB1/MOBKL1A and MOB2/HCCA2 to the N-terminal of STK38. In terms of biological role, serine/threonine-protein kinase that acts as a negative regulator of MAP3K1/2 signaling. Converts MAP3K2 from its phosphorylated form to its non-phosphorylated form and inhibits autophosphorylation of MAP3K2. Acts as an ufmylation 'reader' in a kinase-independent manner: specifically recognizes and binds mono-ufmylated histone H4 in response to DNA damage, promoting the recruitment of SUV39H1 to the double-strand breaks, resulting in ATM activation. The chain is Serine/threonine-protein kinase 38 from Mus musculus (Mouse).